The following is a 493-amino-acid chain: Glutamyl-tRNA(Gln) amidotransferase subunit A (493 aa).

Catalysis depends on charge relay system residues K79 and S159. S183 (acyl-ester intermediate) is an active-site residue.

This sequence belongs to the amidase family. GatA subfamily. Heterotrimer of A, B and C subunits.

It carries out the reaction L-glutamyl-tRNA(Gln) + L-glutamine + ATP + H2O = L-glutaminyl-tRNA(Gln) + L-glutamate + ADP + phosphate + H(+). Functionally, allows the formation of correctly charged Gln-tRNA(Gln) through the transamidation of misacylated Glu-tRNA(Gln) in organisms which lack glutaminyl-tRNA synthetase. The reaction takes place in the presence of glutamine and ATP through an activated gamma-phospho-Glu-tRNA(Gln). This chain is Glutamyl-tRNA(Gln) amidotransferase subunit A, found in Chelativorans sp. (strain BNC1).